We begin with the raw amino-acid sequence, 32 residues long: Secreted proteinase (32 aa).

Positions Asp1–Leu32 are disordered. Residue Asp22 is the Charge relay system of the active site.

The protein belongs to the peptidase S8 family.

Its subcellular location is the secreted. The protein is Secreted proteinase of Haloferax mediterranei (Halobacterium mediterranei).